A 359-amino-acid chain; its full sequence is Ornithine carbamoyltransferase, mitochondrial (359 aa).

A mitochondrion-targeting transit peptide spans 1-24; the sequence is MASLRSVLKSQSLRHTVRSYSSQT. Residues 87-90, arginine 138, histidine 165, and glutamine 168 each bind carbamoyl phosphate; that span reads STRT. L-ornithine is bound by residues asparagine 205, aspartate 271, serine 275, and methionine 276. Cysteine 313 (proton acceptor) is an active-site residue. Residues 313-314 and arginine 340 each bind carbamoyl phosphate; that span reads CL.

This sequence belongs to the aspartate/ornithine carbamoyltransferase superfamily. OTCase family. As to quaternary structure, homotrimer.

The protein resides in the mitochondrion matrix. The enzyme catalyses carbamoyl phosphate + L-ornithine = L-citrulline + phosphate + H(+). The protein operates within amino-acid biosynthesis; L-arginine biosynthesis; L-arginine from L-ornithine and carbamoyl phosphate: step 1/3. This chain is Ornithine carbamoyltransferase, mitochondrial (argB), found in Emericella nidulans (strain FGSC A4 / ATCC 38163 / CBS 112.46 / NRRL 194 / M139) (Aspergillus nidulans).